Consider the following 611-residue polypeptide: tRNA uridine 5-carboxymethylaminomethyl modification enzyme MnmG (611 aa).

14–19 is an FAD binding site; the sequence is GAGHAG. An NAD(+)-binding site is contributed by 274-288; the sequence is GPRYCPSIEDKIVKF.

It belongs to the MnmG family. Homodimer. Heterotetramer of two MnmE and two MnmG subunits. It depends on FAD as a cofactor.

It localises to the cytoplasm. NAD-binding protein involved in the addition of a carboxymethylaminomethyl (cmnm) group at the wobble position (U34) of certain tRNAs, forming tRNA-cmnm(5)s(2)U34. This Chlamydia felis (strain Fe/C-56) (Chlamydophila felis) protein is tRNA uridine 5-carboxymethylaminomethyl modification enzyme MnmG.